The following is a 344-amino-acid chain: Methionine import ATP-binding protein MetN 1 (344 aa).

The ABC transporter domain occupies 2-241 (IELRNLSQRF…PHHEVTRALI (240 aa)). Residue 38-45 (GRSGAGKS) coordinates ATP.

This sequence belongs to the ABC transporter superfamily. Methionine importer (TC 3.A.1.24) family. As to quaternary structure, the complex is composed of two ATP-binding proteins (MetN), two transmembrane proteins (MetI) and a solute-binding protein (MetQ).

The protein resides in the cell inner membrane. It catalyses the reaction L-methionine(out) + ATP + H2O = L-methionine(in) + ADP + phosphate + H(+). The catalysed reaction is D-methionine(out) + ATP + H2O = D-methionine(in) + ADP + phosphate + H(+). In terms of biological role, part of the ABC transporter complex MetNIQ involved in methionine import. Responsible for energy coupling to the transport system. This Burkholderia lata (strain ATCC 17760 / DSM 23089 / LMG 22485 / NCIMB 9086 / R18194 / 383) protein is Methionine import ATP-binding protein MetN 1.